The sequence spans 142 residues: Hemoglobin subunit alpha (142 aa).

Residues 2–142 (VLSPTDKSNV…VSTVLTSKYR (141 aa)) enclose the Globin domain. Ser-4 carries the post-translational modification Phosphoserine. N6-succinyllysine occurs at positions 8 and 12. N6-acetyllysine; alternate is present on Lys-17. Lys-17 is modified (N6-succinyllysine; alternate). Tyr-25 is modified (phosphotyrosine). The residue at position 41 (Lys-41) is an N6-succinyllysine. His-59 contacts O2. His-88 is a binding site for heme b. Ser-103 carries the post-translational modification Phosphoserine. At Thr-109 the chain carries Phosphothreonine. 2 positions are modified to phosphoserine: Ser-125 and Ser-132. Thr-135 and Thr-138 each carry phosphothreonine. Ser-139 carries the phosphoserine modification.

Belongs to the globin family. In terms of assembly, heterotetramer of two alpha chains and two beta chains. As to expression, red blood cells.

Functionally, involved in oxygen transport from the lung to the various peripheral tissues. In terms of biological role, hemopressin acts as an antagonist peptide of the cannabinoid receptor CNR1. Hemopressin-binding efficiently blocks cannabinoid receptor CNR1 and subsequent signaling. This is Hemoglobin subunit alpha (HBA) from Balaenoptera acutorostrata (Common minke whale).